Consider the following 218-residue polypeptide: Capsid protein (218 aa).

Residue Met-1 is modified to N-acetylmethionine; by host. Residues 1-10 show a composition bias toward low complexity; sequence MDKSESASAG. The segment at 1–30 is disordered; sequence MDKSESASAGRNRRRRPRRGSRSASSSSDA. A compositionally biased stretch (basic residues) spans 11–21; the sequence is RNRRRRPRRGS.

The protein belongs to the cucumovirus capsid protein family.

It is found in the virion. In terms of biological role, capsid protein. Probably binds RNA and plays a role in packaging. The chain is Capsid protein from Cucumis sativus (Cucumber).